The sequence spans 145 residues: 3-hydroxyacyl-[acyl-carrier-protein] dehydratase FabZ (145 aa).

H48 is an active-site residue.

Belongs to the thioester dehydratase family. FabZ subfamily.

It is found in the cytoplasm. The catalysed reaction is a (3R)-hydroxyacyl-[ACP] = a (2E)-enoyl-[ACP] + H2O. Functionally, involved in unsaturated fatty acids biosynthesis. Catalyzes the dehydration of short chain beta-hydroxyacyl-ACPs and long chain saturated and unsaturated beta-hydroxyacyl-ACPs. The sequence is that of 3-hydroxyacyl-[acyl-carrier-protein] dehydratase FabZ from Geobacillus sp. (strain WCH70).